The primary structure comprises 455 residues: T-box protein VegT-A (455 aa).

Disordered stretches follow at residues 21-40 (SNCA…SSQD), 229-262 (REQE…DSPE), and 295-346 (ANQG…EPSS). The T-box DNA-binding region spans 57–230 (LWSQFHQEGT…HNPFAKGFRE (174 aa)). Basic and acidic residues predominate over residues 229–241 (REQERSHKRDDVL). Polar residues predominate over residues 308 to 324 (GANQEQQVPTSSSNFYN).

Forms a repression complex on the promoters of the nodal/nr1 and siamois genes with the maternal factors tcf7l1/tcf3 and pouf5.1/oct-25. Interacts (via C-terminus) with tcf7l1/tcf3 (via N-terminus). Also interacts with the other POU-domain transcription factors pou5f1.2/oct-91 and pou5f1.3/oct-60. In terms of tissue distribution, uniformly distributed in stage I oocytes but becomes localized to the vegetal hemisphere by stage II and remains so thereafter throughout oogenesis and the early embryonic cleavage stages. Zygotic expression parallels blastopore formation and shifts from dorsal expression in the marginal zone of late blastula and early gastrula stages to a ventral/lateral expression at the posterior end of later stage embryos. Expression is excluded from the notochord. In tailbud and tadpole stages, expressed exclusively in a subset of posterior Rohon-Beard neurons.

It is found in the nucleus. Functionally, transcription factor required for both mesoderm and endoderm formation in the embryo; signaling determinants and concentration levels may determine which germ layer is formed. Acts together with beta-catenin to activate genes that are responsible for mesoderm induction including wnt-8, eomes t/bra, siamois, mix1 and sox17. Directly binds to promoter DNA. Patterns the mesoderm along the dorsoventral and posterior axis. Activates siamois gene transcription when alone or in combination with beta-catenin, but inhibits siamois transcription in combination with pou5f1.1/oct-25. This chain is T-box protein VegT-A (vegt-a), found in Xenopus laevis (African clawed frog).